A 450-amino-acid chain; its full sequence is Protein tweety homolog 1 (450 aa).

Residues 1–43 are Extracellular-facing; the sequence is MGAPPGYRPSAWVHLLHQLPRADFQLRPVPSAFAPQEREYQQA. Residues 44–64 form a helical membrane-spanning segment; that stretch reads LLLVAALAGLGLGLSLIFIAV. Topologically, residues 65–88 are cytoplasmic; it reads YLIRFCCCRPPEPPGAKSPPPGGG. The helical transmembrane segment at 89–109 threads the bilayer; it reads CVTWNCIAALLVGCAGIGVGF. The Extracellular segment spans residues 110–214; sequence YGNSETSDGV…DVSFVEEYRW (105 aa). Asn130 carries N-linked (GlcNAc...) asparagine glycosylation. A helical membrane pass occupies residues 215–235; it reads LAYVLLLLLELLVCLFTLLGL. Over 236 to 240 the chain is Cytoplasmic; the sequence is ARQSK. A helical transmembrane segment spans residues 241-261; that stretch reads WLVIVMTVMSLLVLVLSWGSM. At 262–390 the chain is on the extracellular side; sequence GLEAATAVGL…LRGLCEDTLE (129 aa). Disulfide bonds link Cys275–Cys385 and Cys303–Cys370. N-linked (GlcNAc...) asparagine glycans are attached at residues Asn284 and Asn355. Residues 391 to 411 traverse the membrane as a helical segment; it reads GLLFLLLFSLLSAGALATVLC. Residues 412 to 450 are Cytoplasmic-facing; that stretch reads SLPRAWALFPPSDDYEDTDDDDPFNPQESKRFVQWQSSI. The segment at 427–450 is disordered; that stretch reads EDTDDDDPFNPQESKRFVQWQSSI. Ser440 is subject to Phosphoserine.

This sequence belongs to the tweety family. In terms of assembly, homotetramer; disulfide-linked. Homodimer. N-glycosylated. Contains high-mannose, hybrid and complex oligosaccharides.

The protein resides in the cell membrane. It catalyses the reaction chloride(in) = chloride(out). It carries out the reaction L-glutamate(out) = L-glutamate(in). Functionally, calcium-independent, swelling-dependent volume-regulated anion channel (VRAC-swell) which plays a pivotal role in the process of regulatory volume decrease (RVD) in the brain through the efflux of anions like chloride and organic osmolytes like glutamate. The chain is Protein tweety homolog 1 (TTYH1) from Bos taurus (Bovine).